Here is a 161-residue protein sequence, read N- to C-terminus: Regulator of ribonuclease activity A (161 aa).

The protein belongs to the RraA family. As to quaternary structure, homotrimer. Binds to both RNA-binding sites in the C-terminal region of Rne and to RhlB.

Its subcellular location is the cytoplasm. Its function is as follows. Globally modulates RNA abundance by binding to RNase E (Rne) and regulating its endonucleolytic activity. Can modulate Rne action in a substrate-dependent manner by altering the composition of the degradosome. Modulates RNA-binding and helicase activities of the degradosome. The chain is Regulator of ribonuclease activity A from Cronobacter sakazakii (strain ATCC BAA-894) (Enterobacter sakazakii).